The following is a 385-amino-acid chain: MSSTGFTSPFGNANPFGSSGRSESGPMHRLVEEDENDTITSPTTPHFGVKNNAAPAFWNGFGGDAPSDMPVRRQPDDFPAHYNLGRRTSVSAESLKPVTDNSDNWSPPVHPKTAEQLERLKKAISGNFLFNHLEDDQSAQVLGALVEKPVPAKGIKVITQGDAGDYFYVVEKGRFEVYVNSTGALQPGPDGMGQKVGEIAEGGSFGELALMYNAPRAATVVSAEPQCTLWALDRVTFRRILMESTFSRRRMYESFLEEVPILKTLTPYERSKIADALESQKYPAGHEIILEGDPGHSFFLLEAGEAAAFKRGNDSPVKNYKKGDFFGELALLNDAPRAASVISQTEVKVARLGKNAFQRLLGPIESILRRTRYVEAEEVDPLQVS.

Residues 1–22 show a composition bias toward polar residues; that stretch reads MSSTGFTSPFGNANPFGSSGRS. Disordered stretches follow at residues 1–51 and 77–111; these read MSST…GVKN and DFPA…PVHP. The interval 1-128 is dimerization and phosphorylation; it reads MSSTGFTSPF…RLKKAISGNF (128 aa). A Phosphoserine modification is found at Ser89. 3',5'-cyclic AMP-binding positions include 129-260, Glu207, Arg216, 261-378, Glu328, and Arg337; these read LFNH…EEVP and ILKT…EAEE.

The protein belongs to the cAMP-dependent kinase regulatory chain family. In terms of assembly, tetramer, composed of 2 regulatory (R) and 2 catalytic (C) subunits. In the presence of cAMP it dissociates into 2 active monomeric C subunits and an R dimer.

The sequence is that of cAMP-dependent protein kinase regulatory subunit (mcb) from Neurospora crassa (strain ATCC 24698 / 74-OR23-1A / CBS 708.71 / DSM 1257 / FGSC 987).